The following is a 152-amino-acid chain: Protein Smg homolog (152 aa).

It belongs to the Smg family.

This Bordetella petrii (strain ATCC BAA-461 / DSM 12804 / CCUG 43448) protein is Protein Smg homolog.